The sequence spans 231 residues: Thiamine import ATP-binding protein ThiQ (231 aa).

The region spanning 2-230 (LRLEDLDIRK…PPPALRGYLG (229 aa)) is the ABC transporter domain. An ATP-binding site is contributed by 32–39 (GPSGAGKS).

Belongs to the ABC transporter superfamily. Thiamine importer (TC 3.A.1.19.1) family. As to quaternary structure, the complex is composed of two ATP-binding proteins (ThiQ), two transmembrane proteins (ThiP) and a solute-binding protein (ThiB).

The protein localises to the cell inner membrane. The enzyme catalyses thiamine(out) + ATP + H2O = thiamine(in) + ADP + phosphate + H(+). Its function is as follows. Part of the ABC transporter complex ThiBPQ involved in thiamine import. Responsible for energy coupling to the transport system. This chain is Thiamine import ATP-binding protein ThiQ, found in Ruegeria sp. (strain TM1040) (Silicibacter sp.).